Consider the following 291-residue polypeptide: Pirin-like protein (291 aa).

This sequence belongs to the pirin family.

Its subcellular location is the nucleus. This Solanum lycopersicum (Tomato) protein is Pirin-like protein.